We begin with the raw amino-acid sequence, 469 residues long: 3-isopropylmalate dehydratase large subunit (469 aa).

[4Fe-4S] cluster-binding residues include cysteine 349, cysteine 410, and cysteine 413.

Belongs to the aconitase/IPM isomerase family. LeuC type 1 subfamily. As to quaternary structure, heterodimer of LeuC and LeuD. Requires [4Fe-4S] cluster as cofactor.

The enzyme catalyses (2R,3S)-3-isopropylmalate = (2S)-2-isopropylmalate. It functions in the pathway amino-acid biosynthesis; L-leucine biosynthesis; L-leucine from 3-methyl-2-oxobutanoate: step 2/4. Functionally, catalyzes the isomerization between 2-isopropylmalate and 3-isopropylmalate, via the formation of 2-isopropylmaleate. This Azoarcus sp. (strain BH72) protein is 3-isopropylmalate dehydratase large subunit.